Reading from the N-terminus, the 506-residue chain is Xaa-Pro aminopeptidase 3 (506 aa).

Residues 1–31 (MPSLLSTPKLAPVLARLRGLSGCMSCLQRRY) constitute a mitochondrion transit peptide. The interval 54–79 (HPHLLRPGEVTPGLSQVEYALRRHKL) is interaction with TNFRSF1B. Residues Tyr300, Asp331, Asp342, His423, His430, Glu450, and Glu474 each coordinate substrate. The Mn(2+) site is built by Asp331, Asp342, and His423. Residues Glu450 and Glu474 each contribute to the Mn(2+) site.

It belongs to the peptidase M24B family. Homodimer. Interacts with TNFRSF1B/TNFR2 (activated) and TRAF2. It depends on Mn(2+) as a cofactor. As to expression, expressed in brain, kidney, heart, liver, skeletal muscle and testis.

The protein resides in the mitochondrion. It localises to the cytoplasm. It catalyses the reaction Release of any N-terminal amino acid, including proline, that is linked to proline, even from a dipeptide or tripeptide.. In terms of biological role, catalyzes the removal of a penultimate prolyl residue from the N-termini of peptides, such as Leu-Pro-Ala. Also shows low activity towards peptides with Ala or Ser at the P1 position. Promotes TNFRSF1B-mediated phosphorylation of MAPK8/JNK1 and MAPK9/JNK2, suggesting a function as an adapter protein for TNFRSF1B; the effect is independent of XPNPEP3 peptidase activity. May inhibit apoptotic cell death induced via TNF-TNFRSF1B signaling. The protein is Xaa-Pro aminopeptidase 3 (Xpnpep3) of Mus musculus (Mouse).